The sequence spans 715 residues: Fatty acid oxidation complex subunit alpha (715 aa).

The segment at 1–190 is enoyl-CoA hydratase/isomerase; that stretch reads MIYEGKAITV…KVGAVDAVVA (190 aa). Asp-297 lines the substrate pocket. Positions 312 to 715 are 3-hydroxyacyl-CoA dehydrogenase; it reads HDVKQAAVLG…MAKNGQRFFN (404 aa). NAD(+) is bound by residues Met-325, Asp-344, 401–403, Lys-408, and Ser-430; that span reads VVE. Catalysis depends on His-451, which acts as the For 3-hydroxyacyl-CoA dehydrogenase activity. Position 454 (Asn-454) interacts with NAD(+). The substrate site is built by Asn-501 and Tyr-660.

In the N-terminal section; belongs to the enoyl-CoA hydratase/isomerase family. The protein in the C-terminal section; belongs to the 3-hydroxyacyl-CoA dehydrogenase family. In terms of assembly, heterotetramer of two alpha chains (FadB) and two beta chains (FadA).

It carries out the reaction a (3S)-3-hydroxyacyl-CoA + NAD(+) = a 3-oxoacyl-CoA + NADH + H(+). The enzyme catalyses a (3S)-3-hydroxyacyl-CoA = a (2E)-enoyl-CoA + H2O. The catalysed reaction is a 4-saturated-(3S)-3-hydroxyacyl-CoA = a (3E)-enoyl-CoA + H2O. It catalyses the reaction (3S)-3-hydroxybutanoyl-CoA = (3R)-3-hydroxybutanoyl-CoA. It carries out the reaction a (3Z)-enoyl-CoA = a 4-saturated (2E)-enoyl-CoA. The enzyme catalyses a (3E)-enoyl-CoA = a 4-saturated (2E)-enoyl-CoA. It participates in lipid metabolism; fatty acid beta-oxidation. Involved in the aerobic and anaerobic degradation of long-chain fatty acids via beta-oxidation cycle. Catalyzes the formation of 3-oxoacyl-CoA from enoyl-CoA via L-3-hydroxyacyl-CoA. It can also use D-3-hydroxyacyl-CoA and cis-3-enoyl-CoA as substrate. The polypeptide is Fatty acid oxidation complex subunit alpha (Pseudomonas putida (strain ATCC 700007 / DSM 6899 / JCM 31910 / BCRC 17059 / LMG 24140 / F1)).